We begin with the raw amino-acid sequence, 412 residues long: AT-rich interactive domain-containing protein 3C (412 aa).

A compositionally biased stretch (low complexity) spans 1 to 23; that stretch reads MEALQKQQAARLAQGVGPLAPAC. Positions 1–96 are disordered; it reads MEALQKQQAA…SSQPPGLHPH (96 aa). Residues 50–73 show a composition bias toward acidic residues; that stretch reads AEEEEDAEEDEEKREEAGAEEEAA. Low complexity predominate over residues 78 to 87; it reads PGAQGPSSPS. Residues 113-205 form the ARID domain; sequence DPKRKEFLDD…YLYPYECETR (93 aa). Disordered regions lie at residues 232–278 and 388–412; these read TPLF…AHAC and PVPA…SILP. Positions 259–272 are enriched in polar residues; sequence TQSSPGPAQGSTSG. In terms of domain architecture, REKLES spans 304-389; that stretch reads LALGPTREKL…GVLFARRQPV (86 aa).

As to quaternary structure, interacts (via REKLES DOMAIN) with NPM1; the interaction mediates ARID3C nuclear shuttling.

It is found in the nucleus. Its function is as follows. Transcription factor involved in monocyte-to-macrophage differentiation. Forms a complex with NPM1 to translocate to the nucleus, acting as a transcription factor that promotes the expression of the genes involved in macrophage differentiation, such as STAT3, STAT1 and JUNB. This Homo sapiens (Human) protein is AT-rich interactive domain-containing protein 3C.